Here is a 148-residue protein sequence, read N- to C-terminus: Probable glycine cleavage system H protein 2 (148 aa).

A Lipoyl-binding domain is found at 32 to 114 (TIVVGITDLA…YGKGWLVKMK (83 aa)). Lys-73 carries the N6-lipoyllysine modification.

Belongs to the GcvH family. As to quaternary structure, the glycine cleavage system is composed of four proteins: P, T, L and H. Requires (R)-lipoate as cofactor.

In terms of biological role, the glycine cleavage system catalyzes the degradation of glycine. The H protein shuttles the methylamine group of glycine from the P protein to the T protein. This Saccharolobus solfataricus (strain ATCC 35092 / DSM 1617 / JCM 11322 / P2) (Sulfolobus solfataricus) protein is Probable glycine cleavage system H protein 2.